The following is a 535-amino-acid chain: Dimethylaniline monooxygenase [N-oxide-forming] 2 (535 aa).

Residues 9-13, Glu32, 40-41, and 61-62 contribute to the FAD site; these read GAGVS, LW, and NT. Residues 60-61 and 195-198 each bind NADP(+); these read TN and SAAD. Lys492 participates in a covalent cross-link: Glycyl lysine isopeptide (Lys-Gly) (interchain with G-Cter in SUMO). The chain crosses the membrane as a helical span at residues 510 to 530; it reads APVSFLIKVLGLLAIVLAFFF.

The protein belongs to the FMO family. Requires FAD as cofactor. Mg(2+) serves as cofactor.

The protein resides in the microsome membrane. It localises to the endoplasmic reticulum membrane. Functionally, catalyzes the oxidative metabolism of numerous xenobiotics, including mainly therapeutic drugs and insecticides that contain a soft nucleophile, most commonly nitrogen and sulfur and participates to their bioactivation. The polypeptide is Dimethylaniline monooxygenase [N-oxide-forming] 2 (Rattus norvegicus (Rat)).